The following is a 205-amino-acid chain: Thymidylate kinase (205 aa).

11–18 lines the ATP pocket; it reads GVEGAGKS.

Belongs to the thymidylate kinase family.

The enzyme catalyses dTMP + ATP = dTDP + ADP. Its function is as follows. Phosphorylation of dTMP to form dTDP in both de novo and salvage pathways of dTTP synthesis. The polypeptide is Thymidylate kinase (Vesicomyosocius okutanii subsp. Calyptogena okutanii (strain HA)).